We begin with the raw amino-acid sequence, 171 residues long: Peptidyl-prolyl cis-trans isomerase (171 aa).

Positions 7 to 170 (FFDLTIGGAP…KPVVIADCGQ (164 aa)) constitute a PPIase cyclophilin-type domain.

Belongs to the cyclophilin-type PPIase family. Expressed in leaves, floral buds, growing shoots and stamens at anthesis.

The protein localises to the cytoplasm. It catalyses the reaction [protein]-peptidylproline (omega=180) = [protein]-peptidylproline (omega=0). Binds cyclosporin A (CsA). CsA mediates some of its effects via an inhibitory action on PPIase. Its function is as follows. PPIases accelerate the folding of proteins. It catalyzes the cis-trans isomerization of proline imidic peptide bonds in oligopeptides. In Solanum lycopersicum (Tomato), this protein is Peptidyl-prolyl cis-trans isomerase.